The sequence spans 676 residues: Envelope glycoprotein (676 aa).

Residues 1 to 34 form the signal peptide; sequence MACSTLSKSPKDKIDPRDLLIPLILFLSLKGARS. The tract at residues 35–270 is receptor-binding domain (RBD); sequence AAPGSSPHQV…SYQNLGPRIP (236 aa). Residues 35–620 lie on the Extracellular side of the membrane; sequence AAPGSSPHQV…FNRSPWFTTL (586 aa). Asparagine 46 is a glycosylation site (N-linked (GlcNAc...) asparagine; by host). Intrachain disulfides connect cysteine 80-cysteine 132, cysteine 106-cysteine 121, cysteine 107-cysteine 117, cysteine 155-cysteine 175, and cysteine 167-cysteine 180. Histidine 89 contacts Zn(2+). Position 120 (aspartate 120) interacts with Zn(2+). N-linked (GlcNAc...) asparagine; by host glycosylation occurs at asparagine 202. Residues cysteine 212 and cysteine 218 are joined by a disulfide bond. Positions 287–321 are disordered; the sequence is NPLPKPAKSPPASSSTPTLISPSPTPTQPPPAGTG. The segment covering 296-308 has biased composition (low complexity); sequence PPASSSTPTLISP. Positions 309 to 318 are enriched in pro residues; it reads SPTPTQPPPA. N-linked (GlcNAc...) asparagine; by host glycosylation occurs at asparagine 336. Cystine bridges form between cysteine 346–cysteine 349, cysteine 346–cysteine 573, cysteine 376–cysteine 430, cysteine 395–cysteine 407, cysteine 437–cysteine 450, and cysteine 565–cysteine 572. The CXXC signature appears at 346-349; sequence CWLC. Asparagine 368 and asparagine 375 each carry an N-linked (GlcNAc...) asparagine; by host glycan. N-linked (GlcNAc...) asparagine; by host glycosylation is found at asparagine 408 and asparagine 444. The segment at 482-502 is fusion peptide; that stretch reads VSLTLALLLGGLTMGGIAAGV. Positions 513–547 form a coiled coil; it reads QQFQQLHAAVQDDLKEVEKSITNLEKSLTSLSEVV. The immunosuppression stretch occupies residues 548–564; sequence LQNRRGLDLLFLKEGGL. The CX6CC motif lies at 565–573; it reads CAALKEECC. The helical transmembrane segment at 621-641 threads the bilayer; the sequence is ISTIMGPLIILLLILLFGPCI. Residue cysteine 640 is the site of S-palmitoyl cysteine; by host attachment. The Cytoplasmic portion of the chain corresponds to 642–676; sequence LNRLVQFVKDRISVVQALVLTQQYHQLKPLEYEPQ. Positions 665–668 match the YXXL motif; contains endocytosis signal motif; sequence YHQL.

As to quaternary structure, the mature envelope protein (Env) consists of a trimer of SU-TM heterodimers attached by a labile interchain disulfide bond. Post-translationally, specific enzymatic cleavages in vivo yield mature proteins. Envelope glycoproteins are synthesized as an inactive precursor that is N-glycosylated and processed likely by host cell furin or by a furin-like protease in the Golgi to yield the mature SU and TM proteins. The cleavage site between SU and TM requires the minimal sequence [KR]-X-[KR]-R. The R-peptide is released from the C-terminus of the cytoplasmic tail of the TM protein upon particle formation as a result of proteolytic cleavage by the viral protease. Cleavage of this peptide is required for TM to become fusogenic. The CXXC motif is highly conserved across a broad range of retroviral envelope proteins. It is thought to participate in the formation of a labile disulfide bond possibly with the CX6CC motif present in the transmembrane protein. Isomerization of the intersubunit disulfide bond to an SU intrachain disulfide bond is thought to occur upon receptor recognition in order to allow membrane fusion. In terms of processing, the transmembrane protein is palmitoylated. Post-translationally, the R-peptide is palmitoylated.

It is found in the virion membrane. The protein localises to the host cell membrane. The surface protein (SU) attaches the virus to the host cell by binding to its receptor. This interaction triggers the refolding of the transmembrane protein (TM) and is thought to activate its fusogenic potential by unmasking its fusion peptide. Fusion occurs at the host cell plasma membrane. In terms of biological role, the transmembrane protein (TM) acts as a class I viral fusion protein. Under the current model, the protein has at least 3 conformational states: pre-fusion native state, pre-hairpin intermediate state, and post-fusion hairpin state. During viral and target cell membrane fusion, the coiled coil regions (heptad repeats) assume a trimer-of-hairpins structure, positioning the fusion peptide in close proximity to the C-terminal region of the ectodomain. The formation of this structure appears to drive apposition and subsequent fusion of viral and target cell membranes. Membranes fusion leads to delivery of the nucleocapsid into the cytoplasm. This Friend murine leukemia virus (isolate FB29) (FrMLV) protein is Envelope glycoprotein (env).